The sequence spans 298 residues: Tyrosine recombinase XerC (298 aa).

Residues 2 to 88 (TDLHTDVERY…ALRSFFDWLV (87 aa)) form the Core-binding (CB) domain. The 180-residue stretch at 109–288 (HLPKNIDVDD…DFQHLASVYD (180 aa)) folds into the Tyr recombinase domain. Catalysis depends on residues Arg148, Lys172, His240, Arg243, and His266. Tyr275 (O-(3'-phospho-DNA)-tyrosine intermediate) is an active-site residue.

The protein belongs to the 'phage' integrase family. XerC subfamily. Forms a cyclic heterotetrameric complex composed of two molecules of XerC and two molecules of XerD, in which XerC interacts with XerD via its C-terminal region, XerD interacts with XerC via its C-terminal region and so on.

It is found in the cytoplasm. FtsK may regulate the catalytic switch between XerC and XerD in the heterotetrameric complex during the two steps of the recombination process. Its function is as follows. Site-specific tyrosine recombinase, which acts by catalyzing the cutting and rejoining of the recombining DNA molecules. Binds cooperatively to specific DNA consensus sequences that are separated from XerD binding sites by a short central region, forming the heterotetrameric XerC-XerD complex that recombines DNA substrates. The complex is essential to convert dimers of the bacterial chromosome into monomers to permit their segregation at cell division. It also contributes to the segregational stability of plasmids. In the complex XerC specifically exchanges the top DNA strands. This chain is Tyrosine recombinase XerC, found in Escherichia coli O6:K15:H31 (strain 536 / UPEC).